The following is a 344-amino-acid chain: tRNA N6-adenosine threonylcarbamoyltransferase (344 aa).

Fe cation is bound by residues His-110 and His-114. Residues 133 to 137 (VMSGA), Asp-166, Gly-179, and Asn-278 contribute to the substrate site. Asp-303 contacts Fe cation.

Belongs to the KAE1 / TsaD family. Requires Fe(2+) as cofactor.

The protein resides in the cytoplasm. It carries out the reaction L-threonylcarbamoyladenylate + adenosine(37) in tRNA = N(6)-L-threonylcarbamoyladenosine(37) in tRNA + AMP + H(+). Its function is as follows. Required for the formation of a threonylcarbamoyl group on adenosine at position 37 (t(6)A37) in tRNAs that read codons beginning with adenine. Is involved in the transfer of the threonylcarbamoyl moiety of threonylcarbamoyl-AMP (TC-AMP) to the N6 group of A37, together with TsaE and TsaB. TsaD likely plays a direct catalytic role in this reaction. This is tRNA N6-adenosine threonylcarbamoyltransferase from Chlamydia felis (strain Fe/C-56) (Chlamydophila felis).